A 744-amino-acid chain; its full sequence is NADH-ubiquinone oxidoreductase 78 kDa subunit, mitochondrial (744 aa).

The span at 1–10 shows a compositional bias: polar residues; the sequence is MLRSTLSRSA. The tract at residues 1 to 26 is disordered; it reads MLRSTLSRSAWRTGRHQAARNASRAF. A mitochondrion-targeting transit peptide spans 1-33; it reads MLRSTLSRSAWRTGRHQAARNASRAFSATAQRP. Positions 34–112 constitute a 2Fe-2S ferredoxin-type domain; sequence AEVELTIDGK…GMVVKTNSPL (79 aa). Cys68, Cys79, Cys82, and Cys96 together coordinate [2Fe-2S] cluster. Residues 112–151 enclose the 4Fe-4S His(Cys)3-ligated-type domain; it reads LTHKAREGVMEFLLANHPLDCPICDQGGECDLQDQSMRYG. The [4Fe-4S] cluster site is built by His128, Cys132, Cys135, Cys141, Cys182, Cys185, Cys188, and Cys232. The 4Fe-4S Mo/W bis-MGD-type domain maps to 251-307; the sequence is LKKTESIDVLDGLGSNIRVDTRGLEVMRILPRLNDEVNEEWINDKTRFACDGLKTQR.

The protein belongs to the complex I 75 kDa subunit family. Complex I is composed of about 40 different subunits. Requires [2Fe-2S] cluster as cofactor. The cofactor is [4Fe-4S] cluster.

The protein localises to the mitochondrion inner membrane. It catalyses the reaction a ubiquinone + NADH + 5 H(+)(in) = a ubiquinol + NAD(+) + 4 H(+)(out). Its function is as follows. Core subunit of the mitochondrial membrane respiratory chain NADH dehydrogenase (Complex I) that is believed to belong to the minimal assembly required for catalysis. Complex I functions in the transfer of electrons from NADH to the respiratory chain. The immediate electron acceptor for the enzyme is believed to be ubiquinone. This is the largest subunit of complex I and it is a component of the iron-sulfur (IP) fragment of the enzyme. It may form part of the active site crevice where NADH is oxidized. The polypeptide is NADH-ubiquinone oxidoreductase 78 kDa subunit, mitochondrial (nuo78) (Neurospora crassa (strain ATCC 24698 / 74-OR23-1A / CBS 708.71 / DSM 1257 / FGSC 987)).